The primary structure comprises 416 residues: UDP-N-acetylmuramoylalanine--D-glutamate ligase (416 aa).

104–110 (GSNGKST) lines the ATP pocket.

The protein belongs to the MurCDEF family.

The protein localises to the cytoplasm. It carries out the reaction UDP-N-acetyl-alpha-D-muramoyl-L-alanine + D-glutamate + ATP = UDP-N-acetyl-alpha-D-muramoyl-L-alanyl-D-glutamate + ADP + phosphate + H(+). Its pathway is cell wall biogenesis; peptidoglycan biosynthesis. Its function is as follows. Cell wall formation. Catalyzes the addition of glutamate to the nucleotide precursor UDP-N-acetylmuramoyl-L-alanine (UMA). The chain is UDP-N-acetylmuramoylalanine--D-glutamate ligase from Francisella tularensis subsp. tularensis (strain FSC 198).